Reading from the N-terminus, the 327-residue chain is Small ribosomal subunit protein uS4m (327 aa).

The S4 RNA-binding domain maps to 96 to 154; it reads SRLDMSIHRALFASSALQARQLVLHGKVHVNGKPERRAYRQLLPGDLVTVDQKSVMNCV. The span at 156-173 shows a compositional bias: polar residues; the sequence is ASSNNTPSIQDGKQTEQV. The segment at 156 to 199 is disordered; it reads ASSNNTPSIQDGKQTEQVSSKDGENEKKKDNDDDLFEQTSNGKL. Residues 174–186 are compositionally biased toward basic and acidic residues; that stretch reads SSKDGENEKKKDN.

It belongs to the universal ribosomal protein uS4 family. In terms of assembly, component of the mitochondrial small ribosomal subunit (mt-SSU). Mature yeast 74S mitochondrial ribosomes consist of a small (37S) and a large (54S) subunit. The 37S small subunit contains a 15S ribosomal RNA (15S mt-rRNA) and at least 32 different proteins. The 54S large subunit contains a 21S rRNA (21S mt-rRNA) and at least 45 different proteins. uS3m, uS4m and uS5m form the narrow entry site of the mRNA channel.

The protein localises to the mitochondrion. In terms of biological role, component of the mitochondrial ribosome (mitoribosome), a dedicated translation machinery responsible for the synthesis of mitochondrial genome-encoded proteins, including at least some of the essential transmembrane subunits of the mitochondrial respiratory chain. The mitoribosomes are attached to the mitochondrial inner membrane and translation products are cotranslationally integrated into the membrane. The sequence is that of Small ribosomal subunit protein uS4m (nam9) from Schizosaccharomyces pombe (strain 972 / ATCC 24843) (Fission yeast).